Consider the following 266-residue polypeptide: Apolipoprotein A-I (266 aa).

The N-terminal stretch at 1–18 (MKAVVLTLAVLFLTGSQA) is a signal peptide. 2 tandem repeats follow at residues 67–88 (LKLL…EQIG) and 89–110 (PVTQ…QEMS). The segment at 67–266 (LKLLDNWDSL…DEATKKLNSQ (200 aa)) is 10 X approximate tandem repeats. Residue Met-109 is modified to Methionine sulfoxide. The stretch at 111–121 (KDLEEVKKKVQ) is one 3; half-length repeat. Repeat copies occupy residues 122 to 143 (PYLD…QKVA), 144 to 165 (PLGA…EKLS), 166 to 187 (PLAE…AQLA), 188 to 209 (PYSE…EGGG), and 210 to 231 (AALT…EKAK). One copy of the 9; half-length repeat lies at 232–242 (PALEDLRQGLL). Residues 243-266 (PVLENFRVSLLAAVDEATKKLNSQ) form repeat 10.

Belongs to the apolipoprotein A1/A4/E family. As to quaternary structure, homodimer. Interacts with APOA1BP and CLU. Component of a sperm activating protein complex (SPAP), consisting of APOA1, an immunoglobulin heavy chain, an immunoglobulin light chain and albumin. Interacts with NDRG1. Interacts with SCGB3A2. Interacts with NAXE and YJEFN3. In terms of processing, glycosylated. Palmitoylated. Post-translationally, phosphorylation sites are present in the extracellular medium.

The protein localises to the secreted. In terms of biological role, participates in the reverse transport of cholesterol from tissues to the liver for excretion by promoting cholesterol efflux from tissues and by acting as a cofactor for the lecithin cholesterol acyltransferase (LCAT). As part of the SPAP complex, activates spermatozoa motility. The chain is Apolipoprotein A-I (APOA1) from Mirounga angustirostris (Northern elephant seal).